We begin with the raw amino-acid sequence, 364 residues long: Aminomethyltransferase (364 aa).

It belongs to the GcvT family. As to quaternary structure, the glycine cleavage system is composed of four proteins: P, T, L and H.

The catalysed reaction is N(6)-[(R)-S(8)-aminomethyldihydrolipoyl]-L-lysyl-[protein] + (6S)-5,6,7,8-tetrahydrofolate = N(6)-[(R)-dihydrolipoyl]-L-lysyl-[protein] + (6R)-5,10-methylene-5,6,7,8-tetrahydrofolate + NH4(+). Functionally, the glycine cleavage system catalyzes the degradation of glycine. In Shewanella baltica (strain OS223), this protein is Aminomethyltransferase.